The sequence spans 101 residues: Large ribosomal subunit protein bL21 (101 aa).

This sequence belongs to the bacterial ribosomal protein bL21 family. As to quaternary structure, part of the 50S ribosomal subunit. Contacts protein L20.

Its function is as follows. This protein binds to 23S rRNA in the presence of protein L20. This Metamycoplasma arthritidis (strain 158L3-1) (Mycoplasma arthritidis) protein is Large ribosomal subunit protein bL21.